Consider the following 595-residue polypeptide: 2-succinyl-5-enolpyruvyl-6-hydroxy-3-cyclohexene-1-carboxylate synthase (595 aa).

This sequence belongs to the TPP enzyme family. MenD subfamily. In terms of assembly, homodimer. The cofactor is Mg(2+). It depends on Mn(2+) as a cofactor. Thiamine diphosphate is required as a cofactor.

It catalyses the reaction isochorismate + 2-oxoglutarate + H(+) = 5-enolpyruvoyl-6-hydroxy-2-succinyl-cyclohex-3-ene-1-carboxylate + CO2. It participates in quinol/quinone metabolism; 1,4-dihydroxy-2-naphthoate biosynthesis; 1,4-dihydroxy-2-naphthoate from chorismate: step 2/7. It functions in the pathway cofactor biosynthesis; phylloquinone biosynthesis. In terms of biological role, catalyzes the thiamine diphosphate-dependent decarboxylation of 2-oxoglutarate and the subsequent addition of the resulting succinic semialdehyde-thiamine pyrophosphate anion to isochorismate to yield 2-succinyl-5-enolpyruvyl-6-hydroxy-3-cyclohexene-1-carboxylate (SEPHCHC). The sequence is that of 2-succinyl-5-enolpyruvyl-6-hydroxy-3-cyclohexene-1-carboxylate synthase from Synechocystis sp. (strain ATCC 27184 / PCC 6803 / Kazusa).